A 200-amino-acid polypeptide reads, in one-letter code: Casparian strip membrane protein 1 (200 aa).

At 1–38 (MKSGDHAAIDVPESSAVAKGKAPLIATPREQKSGFKKG) the chain is on the cytoplasmic side. The helical transmembrane segment at 39–59 (LGIFDFLLRLGAIIAALAAAA) threads the bilayer. Topologically, residues 60 to 86 (TMGTSDETLPFFTQFFQFEASYDDLPT) are extracellular. A helical membrane pass occupies residues 87 to 107 (FMFFVIAMALIGGYLVLSLPF). The Cytoplasmic portion of the chain corresponds to 108 to 121 (SIVTIVRPHAVAPR). Residues 122 to 142 (LLLFILDIVALTLTTAAGAAA) traverse the membrane as a helical segment. At 143–171 (AAIVYLAHNGNPNTNWLAICQQFGDFCQE) the chain is on the extracellular side. A helical transmembrane segment spans residues 172-192 (VSGAVVASFVTVVVLMSLVLL). Over 193–200 (SGVALKKH) the chain is Cytoplasmic.

This sequence belongs to the Casparian strip membrane proteins (CASP) family. Homodimer and heterodimers.

It is found in the cell membrane. Functionally, regulates membrane-cell wall junctions and localized cell wall deposition. Required for establishment of the Casparian strip membrane domain (CSD) and the subsequent formation of Casparian strips, a cell wall modification of the root endodermis that determines an apoplastic barrier between the intraorganismal apoplasm and the extraorganismal apoplasm and prevents lateral diffusion. This is Casparian strip membrane protein 1 from Theobroma cacao (Cacao).